The following is a 393-amino-acid chain: N-acyl-phosphatidylethanolamine-hydrolyzing phospholipase D (393 aa).

At methionine 1 the chain carries N-acetylmethionine. Polar residues predominate over residues 1-16; sequence MDENESNQSLMTSSQY. The disordered stretch occupies residues 1–40; that stretch reads MDENESNQSLMTSSQYPKEAVRKRQNSARNSGGSDSSRFS. Positions 185 and 187 each coordinate Zn(2+). Tyrosine 188 is an an N-acyl-1,2-diacyl-sn-glycero-3-phosphoethanolamine binding site. Residues aspartate 189, histidine 190, and histidine 253 each coordinate Zn(2+). Deoxycholate contacts are provided by lysine 256 and methionine 260. Position 284 (aspartate 284) interacts with Zn(2+). Histidine 321 contributes to the an N-acyl-1,2-diacyl-sn-glycero-3-phosphoethanolamine binding site. Position 343 (histidine 343) interacts with Zn(2+). Alanine 348 is a binding site for deoxycholate.

The protein belongs to the NAPE-PLD family. Homodimer. Bile acids promote the assembly of inactive monomers into an active dimer and enable catalysis. Zn(2+) is required as a cofactor. As to expression, widely expressed. Highest expression in brain, kidney and testis (at protein level). Expressed in adipose tissue (at protein level).

The protein localises to the golgi apparatus membrane. It localises to the early endosome membrane. It is found in the nucleus envelope. The protein resides in the nucleus. Its subcellular location is the nucleoplasm. It carries out the reaction an N-acyl-1,2-diacyl-sn-glycero-3-phosphoethanolamine + H2O = an N-acylethanolamine + a 1,2-diacyl-sn-glycero-3-phosphate + H(+). The enzyme catalyses N-butanoyl-1-hexadecanoyl-2-(9Z,12Z-octadecadienoyl)-sn-glycero-3-phosphoethanolamine + H2O = N-butanoyl ethanolamine + 1-hexadecanoyl-2-(9Z,12Z-octadecadienoyl)-sn-glycero-3-phosphate + H(+). The catalysed reaction is N-hexanoyl-1-hexadecanoyl-2-(9Z,12Z-octadecadienoyl)-sn-glycero-3-phosphoethanolamine + H2O = N-hexanoyl ethanolamine + 1-hexadecanoyl-2-(9Z,12Z-octadecadienoyl)-sn-glycero-3-phosphate + H(+). It catalyses the reaction N-octanoyl-1-hexadecanoyl-2-(9Z,12Z-octadecadienoyl)-sn-glycero-3-phosphoethanolamine + H2O = N-octanoyl ethanolamine + 1-hexadecanoyl-2-(9Z,12Z-octadecadienoyl)-sn-glycero-3-phosphate + H(+). It carries out the reaction N-decanoyl-1-hexadecanoyl-2-(9Z,12Z-octadecadienoyl)-sn-glycero-3-phosphoethanolamine + H2O = N-decanoyl ethanolamine + 1-hexadecanoyl-2-(9Z,12Z-octadecadienoyl)-sn-glycero-3-phosphate + H(+). The enzyme catalyses N-dodecanoyl-1,2-di-(9Z-octadecenoyl)-sn-glycero-3-phosphoethanolamine + H2O = N-dodecanoylethanolamine + 1,2-di-(9Z-octadecenoyl)-sn-glycero-3-phosphate + H(+). The catalysed reaction is N-tetradecanoyl-1,2-di-(9Z-octadecenoyl)-sn-glycero-3-phosphoethanolamine + H2O = N-tetradecanoylethanolamine + 1,2-di-(9Z-octadecenoyl)-sn-glycero-3-phosphate + H(+). It catalyses the reaction N-hexadecanoyl-1,2-di-(9Z-octadecenoyl)-sn-glycero-3-phosphoethanolamine + H2O = N-hexadecanoylethanolamine + 1,2-di-(9Z-octadecenoyl)-sn-glycero-3-phosphate + H(+). It carries out the reaction N,1-dihexadecanoyl-2-(9Z,12Z-octadecadienoyl)-sn-glycero-3-phosphoethanolamine + H2O = 1-hexadecanoyl-2-(9Z,12Z-octadecadienoyl)-sn-glycero-3-phosphate + N-hexadecanoylethanolamine + H(+). The enzyme catalyses N-octadecanoyl-1,2-di-(9Z-octadecenoyl)-sn-glycero-3-phosphoethanolamine + H2O = N-octadecanoyl ethanolamine + 1,2-di-(9Z-octadecenoyl)-sn-glycero-3-phosphate + H(+). The catalysed reaction is N,1,2-tri-(9Z-octadecenoyl)-sn-glycero-3-phosphoethanolamine + H2O = N-(9Z-octadecenoyl) ethanolamine + 1,2-di-(9Z-octadecenoyl)-sn-glycero-3-phosphate + H(+). It catalyses the reaction N-(5Z,8Z,11Z,14Z-eicosatetraenoyl)-1,2-diacyl-sn-glycero-3-phosphoethanolamine + H2O = N-(5Z,8Z,11Z,14Z-eicosatetraenoyl)-ethanolamine + a 1,2-diacyl-sn-glycero-3-phosphate + H(+). It carries out the reaction N-(5Z,8Z,11Z,14Z-eicosatetraenoyl)-1,2-di-(9Z-octadecenoyl)-sn-glycero-3-phosphoethanolamine + H2O = N-(5Z,8Z,11Z,14Z-eicosatetraenoyl)-ethanolamine + 1,2-di-(9Z-octadecenoyl)-sn-glycero-3-phosphate + H(+). The enzyme catalyses 1-O-(1Z-octadecenoyl)-2-(9Z-octadecenoyl)-sn-glycero-3-phospho-N-hexadecanoyl-ethanolamine + H2O = 1-O-(1Z-octadecenoyl)-2-(9Z-octadecenoyl)-sn-glycero-3-phosphate + N-hexadecanoylethanolamine + H(+). The catalysed reaction is N,1-diacyl-sn-glycero-3-phosphoethanolamine + H2O = an N-acylethanolamine + a 1-acyl-sn-glycero-3-phosphate + H(+). It catalyses the reaction N,1-dihexadecanoyl-sn-glycero-3-phosphoethanolamine + H2O = N-hexadecanoylethanolamine + 1-hexadecanoyl-sn-glycero-3-phosphate + H(+). It carries out the reaction N-(5Z,8Z,11Z,14Z-eicosatetraenoyl)-1-(9Z-octadecenoyl)-sn-glycero-3-phosphoethanolamine + H2O = N-(5Z,8Z,11Z,14Z-eicosatetraenoyl)-ethanolamine + 1-(9Z-octadecenoyl)-sn-glycero-3-phosphate + H(+). Its activity is regulated as follows. Activated by divalent cations. Activated by bile acids. D-type phospholipase that hydrolyzes N-acyl-phosphatidylethanolamines (NAPEs) to produce bioactive N-acylethanolamines/fatty acid ethanolamides (NAEs/FAEs) and phosphatidic acid. Cleaves the terminal phosphodiester bond of diacyl- and alkenylacyl-NAPEs, primarily playing a role in the generation of long-chain saturated and monounsaturated NAEs in the brain. May control NAPE homeostasis in dopaminergic neuron membranes and regulate neuron survival, partly through RAC1 activation. As a regulator of lipid metabolism in the adipose tissue, mediates the crosstalk between adipocytes, gut microbiota and immune cells to control body temperature and weight. In particular, regulates energy homeostasis by promoting cold-induced brown or beige adipocyte differentiation program to generate heat from fatty acids and glucose. Has limited D-type phospholipase activity toward N-acyl lyso-NAPEs. This is N-acyl-phosphatidylethanolamine-hydrolyzing phospholipase D (NAPEPLD) from Pongo abelii (Sumatran orangutan).